Here is a 550-residue protein sequence, read N- to C-terminus: MTKFVFVTGGVVSSLGKGIAAASLAAILESRGLKVTLLKLDPYINVDPGTMSPFQHGEVFVTEDGAETDLDLGHYERFVSAKMRKSNNFTTGQIYESVIRKERRGEYLGKTVQVIPHITNEIQAFVERGAAASHDGKADVALVEIGGTVGDIESLPFLEAARQMSLRMGRNHCAFVHLTLVPFIASAGELKTKPTQHSVQKLREIGISPTALLCRADRPIPDDERAKISLFANIPQDAVISVWDADSIYKIPQMLNEQGLDRLICEELRLDPKPADLSMWQKLVNAQENPEHEITIGMVGKYVDLTESYKSLIEALRHAGMHTATRVNIEYIDSEELESGHLEVLAPLDAILVPGGFGKRGTEGKIRAIQYARENKIPYLGICLGMQLAVIEFARHLAGMTDANSTEFNLETEHPVVALITEWVDREGKVEQRSADSDLGGTMRLGAQRVPVKEGTKAATIYGAEVNERHRHRYEVNNHYVPTLEKAGMVISARTPTENLPEMMELPESMHPWFVGVQFHPEFTSTPRDGHPLFKAYVEAALASQQRKGA.

Residues 1–270 (MTKFVFVTGG…DRLICEELRL (270 aa)) form an amidoligase domain region. Ser13 contributes to the CTP binding site. Ser13 serves as a coordination point for UTP. ATP-binding positions include 14–19 (SLGKGI) and Asp71. 2 residues coordinate Mg(2+): Asp71 and Glu144. CTP is bound by residues 151-153 (DIE), 191-196 (KTKPTQ), and Lys227. UTP is bound by residues 191–196 (KTKPTQ) and Lys227. Residues 295–547 (TIGMVGKYVD…VEAALASQQR (253 aa)) enclose the Glutamine amidotransferase type-1 domain. Gly356 serves as a coordination point for L-glutamine. The active-site Nucleophile; for glutamine hydrolysis is the Cys383. L-glutamine contacts are provided by residues 384–387 (LGMQ), Glu407, and Arg473. Residues His520 and Glu522 contribute to the active site.

It belongs to the CTP synthase family. As to quaternary structure, homotetramer.

It catalyses the reaction UTP + L-glutamine + ATP + H2O = CTP + L-glutamate + ADP + phosphate + 2 H(+). The catalysed reaction is L-glutamine + H2O = L-glutamate + NH4(+). The enzyme catalyses UTP + NH4(+) + ATP = CTP + ADP + phosphate + 2 H(+). The protein operates within pyrimidine metabolism; CTP biosynthesis via de novo pathway; CTP from UDP: step 2/2. Its activity is regulated as follows. Allosterically activated by GTP, when glutamine is the substrate; GTP has no effect on the reaction when ammonia is the substrate. The allosteric effector GTP functions by stabilizing the protein conformation that binds the tetrahedral intermediate(s) formed during glutamine hydrolysis. Inhibited by the product CTP, via allosteric rather than competitive inhibition. In terms of biological role, catalyzes the ATP-dependent amination of UTP to CTP with either L-glutamine or ammonia as the source of nitrogen. Regulates intracellular CTP levels through interactions with the four ribonucleotide triphosphates. In Cupriavidus necator (strain ATCC 17699 / DSM 428 / KCTC 22496 / NCIMB 10442 / H16 / Stanier 337) (Ralstonia eutropha), this protein is CTP synthase.